Reading from the N-terminus, the 403-residue chain is MSKFNRIHLVVLDSVGIGAAPDADKFFNAGVADTDSDTLGHISETAGLSVPNMAKIGLGNISRPIPLKTVPTEDNPTGYVTKLEEVSLGKDTMTGHWEIMGLNITEPFDTFWNGFPEEILTKIEEFSGRKIIREANKPYSGTAVIDDFGSRQMETGELIVYTSADPVLQIAAHEDIIPVEELYKICEYARSITLERPALLGRIIARPYVGEPGNFTRTANRHDYAVSPFQDTVLNKLADAGVPTYAVGKINDIFNGSGITNDMGHNKSNSHGIDTLIKTLQLPEFTKGFSFTNLVDFDANFGHRRDPEGYRDCLHEFDNRLPEIIANMKEDDLLLITADHGNDPTYAGTDHTREYIPLLAYSASFTGNGLIPQGHFADISATVAENFGVDIAMIGESFLGHLK.

Mn(2+) is bound by residues Asp13, Asp298, His303, Asp339, His340, and His351.

This sequence belongs to the phosphopentomutase family. Mn(2+) is required as a cofactor.

It localises to the cytoplasm. It catalyses the reaction 2-deoxy-alpha-D-ribose 1-phosphate = 2-deoxy-D-ribose 5-phosphate. The catalysed reaction is alpha-D-ribose 1-phosphate = D-ribose 5-phosphate. It functions in the pathway carbohydrate degradation; 2-deoxy-D-ribose 1-phosphate degradation; D-glyceraldehyde 3-phosphate and acetaldehyde from 2-deoxy-alpha-D-ribose 1-phosphate: step 1/2. Isomerase that catalyzes the conversion of deoxy-ribose 1-phosphate (dRib-1-P) and ribose 1-phosphate (Rib-1-P) to deoxy-ribose 5-phosphate (dRib-5-P) and ribose 5-phosphate (Rib-5-P), respectively. This is Phosphopentomutase from Streptococcus pyogenes serotype M28 (strain MGAS6180).